A 300-amino-acid chain; its full sequence is Acetylglutamate kinase (300 aa).

Substrate contacts are provided by residues 68-69, R90, and N195; that span reads GG.

This sequence belongs to the acetylglutamate kinase family. ArgB subfamily.

It is found in the cytoplasm. It catalyses the reaction N-acetyl-L-glutamate + ATP = N-acetyl-L-glutamyl 5-phosphate + ADP. It participates in amino-acid biosynthesis; L-arginine biosynthesis; N(2)-acetyl-L-ornithine from L-glutamate: step 2/4. Catalyzes the ATP-dependent phosphorylation of N-acetyl-L-glutamate. The sequence is that of Acetylglutamate kinase from Halorhodospira halophila (strain DSM 244 / SL1) (Ectothiorhodospira halophila (strain DSM 244 / SL1)).